Reading from the N-terminus, the 87-residue chain is Omega-theraphotoxin-Gr1a (87 aa).

The signal sequence occupies residues 1-24; the sequence is MKAQIFVVVLGLAALSVLCYGSEA. A propeptide spanning residues 25-49 is cleaved from the precursor; it reads DESALHEEIFQLLAASDEVPKPQER. 3 disulfides stabilise this stretch: Cys51-Cys65, Cys58-Cys70, and Cys64-Cys79. The residue at position 85 (Val85) is a Valine amide.

Expressed by the venom gland.

The protein resides in the secreted. Inhibits P/Q- (Cav2.1/CACNA1A) and N-type (Cav2.2/CACNA1B) voltage-gated calcium channel by modifying voltage-dependent gating. It selectively and reversibly blocks the calcium channels coupled to glutamate release. Also inhibits potassium channels (Kv2.1/KCNB1) with lower affinity. Has also been shown to weakly inhibit Kv11.1/KCNH2/ERG1, Kv1.2/KCNA2, Kv1.3/KCNA3, Nav1.5/SCN5A, Nav1.7/SCN9A and TRPV1. The sequence is that of Omega-theraphotoxin-Gr1a from Grammostola rosea (Chilean rose tarantula).